A 340-amino-acid polypeptide reads, in one-letter code: S-adenosylmethionine:tRNA ribosyltransferase-isomerase (340 aa).

The protein belongs to the QueA family. As to quaternary structure, monomer.

It is found in the cytoplasm. The enzyme catalyses 7-aminomethyl-7-carbaguanosine(34) in tRNA + S-adenosyl-L-methionine = epoxyqueuosine(34) in tRNA + adenine + L-methionine + 2 H(+). It participates in tRNA modification; tRNA-queuosine biosynthesis. In terms of biological role, transfers and isomerizes the ribose moiety from AdoMet to the 7-aminomethyl group of 7-deazaguanine (preQ1-tRNA) to give epoxyqueuosine (oQ-tRNA). This chain is S-adenosylmethionine:tRNA ribosyltransferase-isomerase, found in Nitratiruptor sp. (strain SB155-2).